A 246-amino-acid chain; its full sequence is Sulfate transporter CysZ (246 aa).

A run of 4 helical transmembrane segments spans residues 24–44 (LFVL…IGFA), 69–89 (IVWP…FTMV), 148–168 (LLVL…WILF), and 214–234 (LLIP…ATLF).

Belongs to the CysZ family.

It localises to the cell inner membrane. Functionally, high affinity, high specificity proton-dependent sulfate transporter, which mediates sulfate uptake. Provides the sulfur source for the cysteine synthesis pathway. This chain is Sulfate transporter CysZ, found in Pseudomonas paraeruginosa (strain DSM 24068 / PA7) (Pseudomonas aeruginosa (strain PA7)).